The sequence spans 115 residues: U3-lycotoxin-Ls1l (115 aa).

The N-terminal stretch at 1-20 (MKFVLLFGVLLVTLFSYSSA) is a signal peptide. A propeptide spanning residues 21 to 44 (EMLDDFDQADEDELLSLIEKEEAR) is cleaved from the precursor. Intrachain disulfides connect Cys55/Cys72, Cys62/Cys87, and Cys74/Cys85.

This sequence belongs to the neurotoxin 19 (CSTX) family. 01 subfamily. In terms of tissue distribution, expressed by the venom gland.

It localises to the secreted. This chain is U3-lycotoxin-Ls1l, found in Lycosa singoriensis (Wolf spider).